Reading from the N-terminus, the 368-residue chain is Propane 2-monooxygenase, hydroxylase component small subunit (368 aa).

Belongs to the TmoE/XamoE family. As to quaternary structure, the propane 2-monooxygenase multicomponent enzyme system is composed of an electron transfer component and a monooxygenase component interacting with the effector protein PrmD. The electron transfer component is composed of a reductase (PrmB), and the monooxygenase component is formed by a large subunit (PrmA) and a small subunit (PrmC). Probably requires the presence of the chaperonin-like protein PrmG to ensure a productive folding, resulting of a soluble PrmC, which leads to the active form of PrmABCD.

It carries out the reaction propane + NADH + O2 + H(+) = propan-2-ol + NAD(+) + H2O. In terms of biological role, component of the propane 2-monooxygenase multicomponent enzyme system which is involved in the degradation of propane via the O2-dependent hydroxylation of propane. Also able to catalyze the oxidation the water contaminant N-nitrosodimethylamine (NDMA). In Rhodococcus jostii (strain RHA1), this protein is Propane 2-monooxygenase, hydroxylase component small subunit.